The primary structure comprises 233 residues: Nuclear speckle RNA-binding protein A (233 aa).

3 disordered regions span residues 1–54 (MADG…VPDT), 68–92 (VQSG…GGNV), and 214–233 (FLRL…RGRR). Over residues 71–91 (GEGGSVSMGRSGGGGGGGGGN) the composition is skewed to gly residues. Residues 136–222 (NTLYVEGLPS…KFLRLQFSRK (87 aa)) form the RRM domain.

As to expression, expressed in root meristems, lateral root primordia and root vascular tissues.

The protein resides in the nucleus speckle. In terms of biological role, alternative splicing (AS) regulator that binds to specific mRNAs and modulates auxin effects on the transcriptome. Displaced from its targets upon binding to AS competitor long non-coding RNA (ASCO-RNA). This Arabidopsis thaliana (Mouse-ear cress) protein is Nuclear speckle RNA-binding protein A.